Consider the following 176-residue polypeptide: Large ribosomal subunit protein uL10 (176 aa).

Belongs to the universal ribosomal protein uL10 family. Part of the ribosomal stalk of the 50S ribosomal subunit. The N-terminus interacts with L11 and the large rRNA to form the base of the stalk. The C-terminus forms an elongated spine to which L12 dimers bind in a sequential fashion forming a multimeric L10(L12)X complex.

Functionally, forms part of the ribosomal stalk, playing a central role in the interaction of the ribosome with GTP-bound translation factors. This Saccharophagus degradans (strain 2-40 / ATCC 43961 / DSM 17024) protein is Large ribosomal subunit protein uL10.